The chain runs to 59 residues: Conotoxin mr5a (59 aa).

An N-terminal signal peptide occupies residues 1–22 (MRCLPVFVILLLLIASAPSVDA). Residues 23–48 (RPKTKDDMPLASFHDNAKRILQILQD) constitute a propeptide that is removed on maturation.

Post-translationally, contains 2 disulfide bonds that can be either 'C1-C3, C2-C4' or 'C1-C4, C2-C3', since these disulfide connectivities have been observed for conotoxins with cysteine framework V (for examples, see AC P0DQQ7 and AC P81755). Expressed by the venom duct.

Its subcellular location is the secreted. The protein is Conotoxin mr5a of Conus marmoreus (Marble cone).